The primary structure comprises 95 residues: Integration host factor subunit alpha (95 aa).

Residues 51–71 (NFDLRDKNERPGRNPKTGEDI) form a disordered region. The span at 53 to 69 (DLRDKNERPGRNPKTGE) shows a compositional bias: basic and acidic residues.

This sequence belongs to the bacterial histone-like protein family. Heterodimer of an alpha and a beta chain.

Its function is as follows. This protein is one of the two subunits of integration host factor, a specific DNA-binding protein that functions in genetic recombination as well as in transcriptional and translational control. The polypeptide is Integration host factor subunit alpha (Vibrio vulnificus (strain CMCP6)).